Consider the following 56-residue polypeptide: Large ribosomal subunit protein bL32 (56 aa).

The tract at residues 1–34 is disordered; the sequence is MAVQQNKKSRSKRGMRRSHDSLSTAQLSVDATSG. The span at 7–16 shows a compositional bias: basic residues; sequence KKSRSKRGMR. Residues 21–31 show a composition bias toward polar residues; that stretch reads SLSTAQLSVDA.

This sequence belongs to the bacterial ribosomal protein bL32 family.

The chain is Large ribosomal subunit protein bL32 from Shewanella frigidimarina (strain NCIMB 400).